The chain runs to 1744 residues: MIEPSEDSFETMMELKNPSSKQMESSEGSSNTVEETPGSSGAQAGAQAGAQAEAQAETQVEAQAEAQAEAQVEAQVEAQAGSDSGPAQEEKEPPSGPLKEMQELPTNLLQEVEEPSSGPHQEMQELPTDLLQEVEEPSSGPHQEMQELPTDLLREVEEPSSGPYQEMQELPTDLLREVEEPSSGPYQEMQELPTDLLREVEEPSSGPYQEMQELPTDLLREVEEPSSGPYQEMQELPTDLLREVEEPSSDPCEASSNDLPQDMEESSDDGSNQESSDGSNHELSNGSNHESSFGSNPESSDVSNLESSGGSNQESSDGSQKESSYDSNPELSDNSNQELSDNSNQESSDSSNQSSDISNQEGSEPLSEASDYSMDETINSSETQSDQDDTDLGDDEEEEEEEGGEEEGQPKNSPEEVVATMGNVISLFLRMQDLKEQQRVAERLMMQAINEGRLPSLRPFSGDRRDYHEFVVLCQMTMQNYPSMLYNDELRVKFVIRHLTDLALEWANDLVEQNSPVINNFSAFLEAMSEKFEYRQTLRVAEDAMFNIRQGNRCAADYINEFRGLIPTLGWPDEVLQAHLCQGLNEEIRHYLFRIPQPNSLDNLIVLVLQLEEKLAERRALLRLPPESRPRSVAWMDAPAPEKWRVSSWLPNEFHPDIDRDHLFLLLLVRVDPYHSVAVRALVDSGAEGNYMDERFAQEHYVELYEKPYPQIIQGVDGIPIGNEPVWLCTEPLVCVHQKHYEYIEFDILPSPNFSIVLGMKWLRTHAPEVDWMRGRCTFHSPYCLRNCFTPPPPCIALETYSISLLPGLPHTYSDLADVFNPREADDETSDQPSSDGSDDLSESEPSELQQAGDSDQSGVFYESGARETLEPVSARMQEKARQQEKAREQEEYWILYDMLTDRQDYTQMVPELFDQLHGAAWFTKLELLGIKESEMRHTVTHTEDTWRASFGFGLHQMRCYRPFTMNSYSDEGNNIVHFILKDILGLFVICHGREVLVYSMSQEEHSQHVRQVLVRFRYHNIYCSLDKTQFHRQTAEILGFNISPKGVKLNKNLMNLIVGCPVPGSRRCLQSVIDLVYPYRHFVENFAVIAAPLVRQLLSSEPYYWGEEEQEALESLKRAFRKSPVLYHPKPQNPFYLETDITGSFLSASLVQTDDETGKKSTCAFYSRPLSTMEVEYPRVEMRILPIRAAFMVWCRYLENTEEPIMILLNTEDLASLNNDRLTVLLPGHWVFFFSHFNFGVMEMPAEGDTQALFRRCWNQRGFRARFLRPLLLMSIRANLRYFDRSSETEDKEDDEEEEEEDGEEEEGEEEEDGEEEEGEEEEDGEEEEEEEEDDEEEEGEEEEDGEEEEGEEEEDGEEEEGEEEEDGEEEEGEEEGEEEEEGEEEEEEEEDEEEEEEEEEEEEEEEEEEEEEEEEEEEEEEDEEEEDEEEEDEEVPSMVRELLAAIPMDHILNGLLAHFSVAQIRAVVLNFFRGLLYWKSLLGVAAVLVMLRARQPLSPVPAPNLEVARPQHRHTLRLILDSTLIASSGMATAIAQLLSQMPPLVGANTLPARELAELFLGPRCWHRNALHSQPPRGMRFTPGFWLTLCEFFGVRVNPEDDVFPDPYQHRYLELHVVGDEDVVLREALQDDLQRYRQCGLHDGLQDTSQDAQDNDVQEDLFGDQEAVTFRPRNLLDPEVLDFLNNRLLYTLGTDGRLTLLSRDQVAQALTRFLAMASRMALPSPAREQARLEELSDSDDELD.

3 disordered regions span residues 1–416 (MIEP…SPEE), 823–859 (READ…DQSG), and 1287–1439 (SSET…EVPS). Residues 19–30 (SSKQMESSEGSS) show a composition bias toward low complexity. The span at 31–40 (NTVEETPGSS) shows a compositional bias: polar residues. Positions 41-80 (GAQAGAQAGAQAEAQAETQVEAQAEAQAEAQVEAQVEAQA) are enriched in low complexity. The span at 269–318 (DGSNQESSDGSNHELSNGSNHESSFGSNPESSDVSNLESSGGSNQESSDG) shows a compositional bias: polar residues. Low complexity predominate over residues 332 to 361 (SDNSNQELSDNSNQESSDSSNQSSDISNQE). Composition is skewed to acidic residues over residues 385 to 407 (SDQD…GEEE), 837 to 846 (GSDDLSESEP), and 1291 to 1437 (EDKE…DEEV). 2 consecutive transmembrane segments (helical) span residues 1473-1493 (FFRG…LVML) and 1520-1540 (LILD…AQLL).

As to expression, expressed in placenta and in various tissues in late-fetal stage.

It is found in the membrane. In terms of biological role, plays an essential role in capillaries endothelial cells for the maintenance of feto-maternal interface and for development of the placenta. The sequence is that of Retrotransposon-like protein 1 (Rtl1) from Mus musculus (Mouse).